The sequence spans 847 residues: Zinc transporter ZIP10 (847 aa).

The N-terminal stretch at 1–26 is a signal peptide; the sequence is MMRVHTHTRLCFLCVLTLLYHQCSHC. The disordered stretch occupies residues 136 to 374; it reads GRHSHSAGHP…RREVPGSPAH (239 aa). Over residues 162–171 the composition is skewed to basic and acidic residues; it reads HHENEEHTLA. Residues 179–188 show a composition bias toward polar residues; it reads TLGTGATPPS. Residues 190–269 are compositionally biased toward basic and acidic residues; the sequence is SEEHDHDHEH…QEHNDLSDQN (80 aa). Basic residues-rich tracts occupy residues 270–285 and 314–330; these read HHHH…HPHL and TRRH…RGRN. The N-linked (GlcNAc...) asparagine glycan is linked to Asn-385. The next 3 membrane-spanning stretches (helical) occupy residues 447-467, 474-494, and 529-549; these read FVSI…VPIL, FLLT…ALLH, and GLTA…IGMF. A disordered region spans residues 613–676; sequence ELQPLDSPSK…HSHHGHCHSD (64 aa). Residues 629 to 646 show a composition bias toward basic and acidic residues; that stretch reads DSDHPYEAPVKTEEDNVP. The span at 648–672 shows a compositional bias: basic residues; it reads AKSKKHGHGHGHGHGHGHGHSHHGH. The next 4 helical transmembrane spans lie at 705 to 725, 750 to 770, 779 to 799, and 817 to 837; these read AIGA…VAVF, IVYN…GTAV, SWIF…DMLP, and FVLQ…IAIF.

Belongs to the ZIP transporter (TC 2.A.5) family. In terms of processing, undergoes N-terminal ectodomain shedding.

It localises to the cell membrane. Its subcellular location is the apical cell membrane. It carries out the reaction Zn(2+)(in) = Zn(2+)(out). In terms of biological role, zinc-influx transporter. When associated with slc39a6, the heterodimer slc39a10/slc39a6 has a functional role in epithelial-mesenchymal transition (EMT) during embryonic development. Slc39a10/slc39a6 heterodimers play also an essentiel role in initiating mitosis by importing zinc into cells to initiate a pathway resulting in the onset of mitosis. When associated with slc39a6, the heterodimer controls Ncam1 phosphorylation and integration into focal adhesion complexes during EMT. The protein is Zinc transporter ZIP10 of Danio rerio (Zebrafish).